We begin with the raw amino-acid sequence, 475 residues long: UDP-glycosyltransferase 84A4 (475 aa).

His20 (proton acceptor) is an active-site residue. His20 is a binding site for an anthocyanidin. UDP-alpha-D-glucose-binding residues include Gln342, His357, Trp360, Asn361, Ser362, and Glu365. Gly380 provides a ligand contact to an anthocyanidin. The UDP-alpha-D-glucose site is built by Asp381 and Gln382.

It belongs to the UDP-glycosyltransferase family.

It catalyses the reaction (E)-4-coumarate + UDP-alpha-D-glucose = 4-O-(beta-D-glucosyl)-trans-4-coumarate + UDP + H(+). It carries out the reaction (E)-ferulate + UDP-alpha-D-glucose = 1-O-[(E)-feruloyl]-beta-D-glucose + UDP. The catalysed reaction is (E)-caffeate + UDP-alpha-D-glucose = 1-O-[(E)-caffeoyl]-beta-D-glucose + UDP. The enzyme catalyses (E)-sinapate + UDP-alpha-D-glucose = 1-O-(trans-sinapoyl)-beta-D-glucose + UDP. It catalyses the reaction (E)-cinnamate + UDP-alpha-D-glucose = 1-O-(trans-cinnamoyl)-beta-D-glucose + UDP. Its function is as follows. UDP-glucosyltransferase that forms glucose esters with phenylpropanoids. Glucosylates 4-coumarate, ferulate, caffeate, sinapate and cinnamate. The sequence is that of UDP-glycosyltransferase 84A4 from Arabidopsis thaliana (Mouse-ear cress).